A 229-amino-acid chain; its full sequence is Sugar fermentation stimulation protein homolog (229 aa).

The protein belongs to the SfsA family.

The protein is Sugar fermentation stimulation protein homolog of Carboxydothermus hydrogenoformans (strain ATCC BAA-161 / DSM 6008 / Z-2901).